A 289-amino-acid polypeptide reads, in one-letter code: Protease HtpX (289 aa).

The next 2 helical transmembrane spans lie at isoleucine 5–leucine 25 and methionine 33–leucine 53. Residue histidine 140 participates in Zn(2+) binding. Residue glutamate 141 is part of the active site. Histidine 144 contributes to the Zn(2+) binding site. Helical transmembrane passes span leucine 155–isoleucine 175 and glycine 193–phenylalanine 213. Zn(2+) is bound at residue glutamate 218.

It belongs to the peptidase M48B family. It depends on Zn(2+) as a cofactor.

It localises to the cell inner membrane. The chain is Protease HtpX from Xylella fastidiosa (strain M12).